Reading from the N-terminus, the 215-residue chain is Proteasome subunit beta (215 aa).

The propeptide at 1 to 12 (MLGEIQDKVYKG) is removed in mature form; by autocatalysis. Thr13 (nucleophile) is an active-site residue.

It belongs to the peptidase T1B family. The 20S proteasome core is composed of 14 alpha and 14 beta subunits that assemble into four stacked heptameric rings, resulting in a barrel-shaped structure. The two inner rings, each composed of seven catalytic beta subunits, are sandwiched by two outer rings, each composed of seven alpha subunits. The catalytic chamber with the active sites is on the inside of the barrel. Has a gated structure, the ends of the cylinder being occluded by the N-termini of the alpha-subunits. Is capped at one or both ends by the proteasome regulatory ATPase, PAN.

It is found in the cytoplasm. It carries out the reaction Cleavage of peptide bonds with very broad specificity.. Its activity is regulated as follows. The formation of the proteasomal ATPase PAN-20S proteasome complex, via the docking of the C-termini of PAN into the intersubunit pockets in the alpha-rings, triggers opening of the gate for substrate entry. Interconversion between the open-gate and close-gate conformations leads to a dynamic regulation of the 20S proteasome proteolysis activity. Functionally, component of the proteasome core, a large protease complex with broad specificity involved in protein degradation. The polypeptide is Proteasome subunit beta (Archaeoglobus profundus (strain DSM 5631 / JCM 9629 / NBRC 100127 / Av18)).